The chain runs to 152 residues: Ribosome maturation factor RimP (152 aa).

Belongs to the RimP family.

It localises to the cytoplasm. Its function is as follows. Required for maturation of 30S ribosomal subunits. The sequence is that of Ribosome maturation factor RimP from Ectopseudomonas mendocina (strain ymp) (Pseudomonas mendocina).